The following is a 139-amino-acid chain: Large-conductance mechanosensitive channel (139 aa).

The next 2 helical transmembrane spans lie at 9–29 (AFAV…GAAF) and 79–99 (IQSV…VKAI).

This sequence belongs to the MscL family. In terms of assembly, homopentamer.

It localises to the cell inner membrane. Its function is as follows. Channel that opens in response to stretch forces in the membrane lipid bilayer. May participate in the regulation of osmotic pressure changes within the cell. This chain is Large-conductance mechanosensitive channel, found in Pseudomonas fluorescens (strain SBW25).